A 525-amino-acid chain; its full sequence is D-arabinono-1,4-lactone oxidase (525 aa).

One can recognise an FAD-binding PCMH-type domain in the interval 20 to 195; that stretch reads IYSSRPEWYF…VGATVRVVPA (176 aa). His58 carries the pros-8alpha-FAD histidine modification.

The protein belongs to the oxygen-dependent FAD-linked oxidoreductase family. The cofactor is FAD.

The protein resides in the mitochondrion membrane. It carries out the reaction D-arabinono-1,4-lactone + O2 = dehydro-D-arabinono-1,4-lactone + H2O2 + H(+). Its pathway is cofactor biosynthesis; D-erythroascorbate biosynthesis; dehydro-D-arabinono-1,4-lactone from D-arabinose: step 2/2. This Candida glabrata (strain ATCC 2001 / BCRC 20586 / JCM 3761 / NBRC 0622 / NRRL Y-65 / CBS 138) (Yeast) protein is D-arabinono-1,4-lactone oxidase (ALO1).